Consider the following 245-residue polypeptide: MSTNPKPTFRRILLKLSGEALMGEEGFGIDPKVLDRMAQEVKELVELGIQVGVVIGGGNLFRGEGLAKAGMNRVVGDHMGMLATVMNGLAMRDALHRAYVNARLMSAIPLKGVCDDYNWAEAISLLKSGRVVIFAAGTGNPFCTTDSAACLRGIEIEAEVVLKGTKVDGVYSDDPMKNPDAVKYDELSYSEILEKELKVMDLAAFTMARDHDMPILVFNMNKPGALRRVIMGEEEGTLIRAKKVI.

15–18 (KLSG) provides a ligand contact to ATP. Residues 23 to 28 (GEEGFG) are involved in allosteric activation by GTP. G57 provides a ligand contact to UMP. Positions 58 and 62 each coordinate ATP. UMP contacts are provided by residues D77 and 138-145 (TGNPFCTT). ATP-binding residues include T165, Y171, and D174.

This sequence belongs to the UMP kinase family. Homohexamer.

It localises to the cytoplasm. It carries out the reaction UMP + ATP = UDP + ADP. The protein operates within pyrimidine metabolism; CTP biosynthesis via de novo pathway; UDP from UMP (UMPK route): step 1/1. Its activity is regulated as follows. Allosterically activated by GTP. Inhibited by UTP. Its function is as follows. Catalyzes the reversible phosphorylation of UMP to UDP. The protein is Uridylate kinase of Shewanella putrefaciens (strain CN-32 / ATCC BAA-453).